The chain runs to 279 residues: Biotin synthase (279 aa).

The Radical SAM core domain occupies 1 to 228 (MKDIFLCSIC…SARLMIAGGR (228 aa)). Residues C17, C21, and C24 each contribute to the [4Fe-4S] cluster site. Residues C61, C96, C154, and R221 each coordinate [2Fe-2S] cluster.

This sequence belongs to the radical SAM superfamily. Biotin synthase family. Homodimer. Requires [4Fe-4S] cluster as cofactor. [2Fe-2S] cluster serves as cofactor.

It carries out the reaction (4R,5S)-dethiobiotin + (sulfur carrier)-SH + 2 reduced [2Fe-2S]-[ferredoxin] + 2 S-adenosyl-L-methionine = (sulfur carrier)-H + biotin + 2 5'-deoxyadenosine + 2 L-methionine + 2 oxidized [2Fe-2S]-[ferredoxin]. The protein operates within cofactor biosynthesis; biotin biosynthesis; biotin from 7,8-diaminononanoate: step 2/2. Its function is as follows. Catalyzes the conversion of dethiobiotin (DTB) to biotin by the insertion of a sulfur atom into dethiobiotin via a radical-based mechanism. The chain is Biotin synthase from Wolinella succinogenes (strain ATCC 29543 / DSM 1740 / CCUG 13145 / JCM 31913 / LMG 7466 / NCTC 11488 / FDC 602W) (Vibrio succinogenes).